We begin with the raw amino-acid sequence, 226 residues long: Transcriptional regulatory protein DpiA (226 aa).

The region spanning threonine 6–arginine 122 is the Response regulatory domain. Aspartate 57 bears the 4-aspartylphosphate mark. A DNA-binding region (H-T-H motif) is located at residues alanine 180–glutamate 199.

Phosphorylated and activated by DpiB.

It is found in the cytoplasm. In terms of biological role, member of the two-component regulatory system DpiA/DpiB, which is essential for expression of citrate-specific fermentation genes and genes involved in plasmid inheritance. Could be involved in response to both the presence of citrate and external redox conditions. The polypeptide is Transcriptional regulatory protein DpiA (dpiA) (Escherichia coli O157:H7).